An 86-amino-acid chain; its full sequence is Antimicrobial peptide 2 (86 aa).

The N-terminal stretch at 1 to 25 is a signal peptide; the sequence is MVNMKCVALIVIVMMAFMMVDPSMG. 3 disulfide bridges follow: Cys-29–Cys-40, Cys-34–Cys-46, and Cys-39–Cys-53. Residues 29-53 enclose the Chitin-binding type-1 domain; sequence CVRGRCPSGMCCSQFGYCGKGPKYC. A propeptide spans 56-86 (removed in mature form); that stretch reads ASTTVDHQADVAATKTAKNPTDAKLAGAGSP.

As to quaternary structure, homodimer.

Its function is as follows. Chitin-binding protein with a defensive function against numerous chitin containing fungal pathogens. It is also a potent inhibitor of Gram-positive bacteria. The chain is Antimicrobial peptide 2 from Amaranthus caudatus (Love-lies-bleeding).